A 112-amino-acid polypeptide reads, in one-letter code: Larval cuticle protein 4 (112 aa).

The N-terminal stretch at 1–16 (MFKILLVCALVALVAA) is a signal peptide. In terms of domain architecture, Chitin-binding type R&amp;R spans 31–92 (ADGFVSKLVL…PQSDLLPTPP (62 aa)).

Functionally, component of the larval cuticle. The chain is Larval cuticle protein 4 (Lcp4) from Drosophila melanogaster (Fruit fly).